A 254-amino-acid chain; its full sequence is Putative ankyrin-containing lipoprotein Lxx09580 (254 aa).

An N-terminal signal peptide occupies residues 1-22; sequence MTEIRYVRLLTLVLASSVLLAG. Cys-23 carries the N-palmitoyl cysteine lipid modification. Cys-23 is lipidated: S-diacylglycerol cysteine. ANK repeat units lie at residues 56 to 85, 89 to 118, 122 to 151, 155 to 184, and 188 to 222; these read AATA…AIED, GGRT…DVNA, IQDS…DVNA, FNGT…DLDH, and PGWT…NPDI.

It localises to the cell membrane. The polypeptide is Putative ankyrin-containing lipoprotein Lxx09580 (Leifsonia xyli subsp. xyli (strain CTCB07)).